A 349-amino-acid chain; its full sequence is Acyl-CoA:acyl-CoA alkyltransferase (349 aa).

Glu-97 acts as the Proton acceptor in catalysis. Cys-123 functions as the Acyl-thioester intermediate in the catalytic mechanism.

It belongs to the thiolase-like superfamily. OleA family.

It catalyses the reaction a 1,2-saturated acyl-CoA + an acyl-CoA + H2O = an (R)-2-alkyl-3-oxoalkanoate + 2 CoA + H(+). Its function is as follows. Involved in olefin biosynthesis. Catalyzes a non-decarboxylative head-to-head Claisen condensation of two acyl-CoA molecules, generating an (R)-2-alkyl-3-oxoalkanoate. The S.oneidensis oleABCD genes produce 3,6,9,12,15,19,22,25,28-hentriacontanonaene, which may aid the cells in adapting to a sudden drop in temperature. In Shewanella oneidensis (strain ATCC 700550 / JCM 31522 / CIP 106686 / LMG 19005 / NCIMB 14063 / MR-1), this protein is Acyl-CoA:acyl-CoA alkyltransferase.